Here is a 233-residue protein sequence, read N- to C-terminus: Pathogenesis-related thaumatin-like protein 3.2 (233 aa).

Residues 1–22 (MARAMHTVWIALVPTLFVFLQG) form the signal peptide. 8 disulfides stabilise this stretch: Cys-36/Cys-232, Cys-77/Cys-87, Cys-92/Cys-98, Cys-145/Cys-221, Cys-151/Cys-204, Cys-159/Cys-169, Cys-173/Cys-182, and Cys-183/Cys-191. A glycan (N-linked (GlcNAc...) asparagine) is linked at Asn-195.

Belongs to the thaumatin family. In terms of tissue distribution, strongly expressed in roots and in female and male strobili, and, to a lower extent, in cotyledons, leaves, stems and pollen grains.

Functionally, may be involved in disease resistance. In Cryptomeria japonica (Japanese cedar), this protein is Pathogenesis-related thaumatin-like protein 3.2.